We begin with the raw amino-acid sequence, 1016 residues long: DENN domain-containing protein 1A (1016 aa).

One can recognise a uDENN domain in the interval 13–145 (FEVYVEVAYP…HRLPIPDPGV (133 aa)). One can recognise a cDENN domain in the interval 162–298 (ELPSIPENRN…VISSLKNRLK (137 aa)). The region spanning 300 to 378 (VSTTTGDGVA…DGRLDLLNSG (79 aa)) is the dDENN domain. The FXDXF motif signature appears at 381–385 (FSDVF). Positions 453 to 565 (DITENGCVSS…GPTPAPPDRA (113 aa)) are disordered. Ser473 is subject to Phosphoserine. The span at 479 to 489 (QDPRLREDRRP) shows a compositional bias: basic and acidic residues. Basic residues predominate over residues 500–509 (PRPHVVRRPK). Thr519 is subject to Phosphothreonine. 6 positions are modified to phosphoserine: Ser520, Ser522, Ser523, Ser536, Ser538, and Ser546. The short motif at 569–578 (DLLEDVFSSL) is the Clathrin box element. Position 592 is a phosphoserine (Ser592). Residues 681 to 737 (LSPSIKEETPIPTPGSITIPRPQGRKTPELGIVPPPPTARPAKLQAAGGPLGDFSSE) are disordered. Residue Ser750 is modified to Phosphoserine. Arg760 is subject to Omega-N-methylarginine. Disordered stretches follow at residues 763–783 (PQGP…AGTG) and 935–1016 (SARA…ETFE). Residues 954–970 (LLPPRPPQSLQPTPQPS) are compositionally biased toward pro residues. 2 stretches are compositionally biased toward basic and acidic residues: residues 977 to 988 (DPFEDLLRKTKQ) and 1007 to 1016 (QLRRQWETFE).

In terms of assembly, interacts with RAB35. Interacts with clathrin and with the adapter protein complex 2, AP-2. Interacts with ITSN1 and SH3GL2. Interacts (when phosphorylated) with YWHAE. Phosphorylated on serine and/or threonine in an Akt-dependent manner. Phosphorylation probably regulates the guanine nucleotide exchange factor (GEF) activity, possibly by disrupting an intramolecular interaction between the DENN domain and the C-terminus of the protein, thereby relieving the autoinhibition.

It is found in the cytoplasmic vesicle. The protein localises to the clathrin-coated vesicle membrane. Its subcellular location is the presynaptic cell membrane. The guanine nucleotide exchange factor (GEF) activity is autoinhibited. Autoinhibition may be the result of intramolecular interaction between the DENN domain and the C-terminus, which is disrupted upon phosphorylation. Activation is regulated by Akt activation. Functionally, guanine nucleotide exchange factor (GEF) regulating clathrin-mediated endocytosis through RAB35 activation. Promotes the exchange of GDP to GTP, converting inactive GDP-bound RAB35 into its active GTP-bound form. Regulates clathrin-mediated endocytosis of synaptic vesicles and mediates exit from early endosomes. Binds phosphatidylinositol-phosphates (PtdInsPs), with some preference for PtdIns(3)P. This chain is DENN domain-containing protein 1A (Dennd1a), found in Mus musculus (Mouse).